A 524-amino-acid polypeptide reads, in one-letter code: Alanine aminotransferase 2 (524 aa).

Lys-342 is subject to N6-(pyridoxal phosphate)lysine.

This sequence belongs to the class-I pyridoxal-phosphate-dependent aminotransferase family. Alanine aminotransferase subfamily. Homodimer. The cofactor is pyridoxal 5'-phosphate.

It catalyses the reaction L-alanine + 2-oxoglutarate = pyruvate + L-glutamate. Its pathway is amino-acid degradation; L-alanine degradation via transaminase pathway; pyruvate from L-alanine: step 1/1. In terms of biological role, catalyzes the reversible transamination between alanine and 2-oxoglutarate to form pyruvate and glutamate. This chain is Alanine aminotransferase 2 (gpt2), found in Xenopus tropicalis (Western clawed frog).